Reading from the N-terminus, the 429-residue chain is Bifunctional phosphoribosylaminoimidazole carboxylase/phosphoribosylaminoimidazole succinocarboxamide synthetase (429 aa).

The segment at 7–264 (ASIEGYKLGK…WVAEQLADIV (258 aa)) is SAICAR synthetase. Residues 7–264 (ASIEGYKLGK…WVAEQLADIV (258 aa)) are SAICAR synthetase domain. The tract at residues 265–429 (PKKDHLVVIL…DKELRGVRNA (165 aa)) is AIR carboxylase. An AIR carboxylase domain region spans residues 270 to 429 (LVVILMGSAS…DKELRGVRNA (160 aa)). Ser335 contacts CO2.

The protein in the N-terminal section; belongs to the SAICAR synthetase family. It in the C-terminal section; belongs to the AIR carboxylase family. Class II subfamily. As to quaternary structure, homooctamer.

It catalyses the reaction 5-amino-1-(5-phospho-D-ribosyl)imidazole-4-carboxylate + L-aspartate + ATP = (2S)-2-[5-amino-1-(5-phospho-beta-D-ribosyl)imidazole-4-carboxamido]succinate + ADP + phosphate + 2 H(+). The enzyme catalyses 5-amino-1-(5-phospho-D-ribosyl)imidazole-4-carboxylate + H(+) = 5-amino-1-(5-phospho-beta-D-ribosyl)imidazole + CO2. It participates in purine metabolism; IMP biosynthesis via de novo pathway; 5-amino-1-(5-phospho-D-ribosyl)imidazole-4-carboxamide from 5-amino-1-(5-phospho-D-ribosyl)imidazole-4-carboxylate: step 1/2. It functions in the pathway purine metabolism; IMP biosynthesis via de novo pathway; 5-amino-1-(5-phospho-D-ribosyl)imidazole-4-carboxylate from 5-amino-1-(5-phospho-D-ribosyl)imidazole (carboxylase route): step 1/1. Its function is as follows. Bifunctional phosphoribosylaminoimidazole carboxylase and phosphoribosylaminoimidazole succinocarboxamide synthetase catalyzing two reactions of the de novo purine biosynthetic pathway. This Drosophila melanogaster (Fruit fly) protein is Bifunctional phosphoribosylaminoimidazole carboxylase/phosphoribosylaminoimidazole succinocarboxamide synthetase.